The following is a 220-amino-acid chain: tRNA (guanine-N(7)-)-methyltransferase (220 aa).

Positions 44, 69, 96, and 118 each coordinate S-adenosyl-L-methionine. Aspartate 118 is a catalytic residue. Lysine 122 serves as a coordination point for substrate. Residues 124–129 are interaction with RNA; sequence RHEKRR. Substrate-binding positions include aspartate 154 and 191–194; that span reads TEYE.

It belongs to the class I-like SAM-binding methyltransferase superfamily. TrmB family.

It catalyses the reaction guanosine(46) in tRNA + S-adenosyl-L-methionine = N(7)-methylguanosine(46) in tRNA + S-adenosyl-L-homocysteine. Its pathway is tRNA modification; N(7)-methylguanine-tRNA biosynthesis. In terms of biological role, catalyzes the formation of N(7)-methylguanine at position 46 (m7G46) in tRNA. The polypeptide is tRNA (guanine-N(7)-)-methyltransferase (Halalkalibacterium halodurans (strain ATCC BAA-125 / DSM 18197 / FERM 7344 / JCM 9153 / C-125) (Bacillus halodurans)).